A 380-amino-acid polypeptide reads, in one-letter code: Glycine betaine/carnitine/choline transport ATP-binding protein OpuCA (380 aa).

The 235-residue stretch at 2–236 (LKLEQVSKVY…PANEFVEEFI (235 aa)) folds into the ABC transporter domain. 35-42 (GPSGCGKT) is an ATP binding site. CBS domains follow at residues 255 to 314 (MNRT…VGDV) and 315 to 373 (YRSD…WGDE).

It belongs to the ABC transporter superfamily. In terms of assembly, the complex is composed of two ATP-binding proteins (OpuCA), two transmembrane proteins (OpuCB and OpuCD) and a solute-binding protein (OpuCC).

With respect to regulation, binds cyclic di-AMP (c-di-AMP), which may regulate the transporter activity. Involved in a high affinity multicomponent binding-protein-dependent transport system for glycine betaine, carnitine and choline; probably responsible for energy coupling to the transport system. The protein is Glycine betaine/carnitine/choline transport ATP-binding protein OpuCA (opuCA) of Bacillus subtilis (strain 168).